A 350-amino-acid polypeptide reads, in one-letter code: Induced myeloid leukemia cell differentiation protein Mcl-1 (350 aa).

Residues Lys5 and Lys40 each participate in a glycyl lysine isopeptide (Lys-Gly) (interchain with G-Cter in ubiquitin) cross-link. Residues 47 to 87 (EIGGGEAGAVIGGSAGASPPSTLTPDSRRVARPPPIGAEVP) form a disordered region. Gly residues predominate over residues 50–61 (GGEAGAVIGGSA). Residues 104–175 (RAAPLEEMEA…PAEEEEDELY (72 aa)) are PEST-like. A Phosphoserine modification is found at Ser121. Lys136 participates in a covalent cross-link: Glycyl lysine isopeptide (Lys-Gly) (interchain with G-Cter in ubiquitin). The interval 148 to 171 (GESGNNTSTDGSLPSTPPPAEEEE) is disordered. The span at 150–161 (SGNNTSTDGSLP) shows a compositional bias: polar residues. Ser159 is subject to Phosphoserine; by GSK3-alpha and GSK3-beta. Residue Ser162 is modified to Phosphoserine. Residue Thr163 is modified to Phosphothreonine; by MAPK. Residues Lys194 and Lys197 each participate in a glycyl lysine isopeptide (Lys-Gly) (interchain with G-Cter in ubiquitin) cross-link. Residues 209-223 (ALETLRRVGDGVQRN) carry the BH3 motif. The BH1 motif lies at 252–272 (HVFSDGVTNWGRIVTLISFGA). The short motif at 304 to 319 (DWLVKQRGWDGFVEFF) is the BH2 element. A helical transmembrane segment spans residues 328–348 (IRNVLLAFAGVAGVGAGLAYL).

Belongs to the Bcl-2 family. Interacts with HIF3A (via C-terminus domain). Interacts with BAD, BOK, BIK and BMF. Interacts with PMAIP1. Interacts with BBC3. Isoform 1 interacts with BAX, BAK1 and TPT1. Heterodimer of isoform 1 and isoform 2. Homodimers of isoform 1 or isoform 2 are not detected. Isoform 2 does not interact with pro-apoptotic BCL2-related proteins. Interacts with RTL10/BOP. Interacts with BCL2L11; may sequester BCL2L11 to prevent its pro-apoptotic activity. Interacts with GIMAP5 and HSPA8/HSC70; the interaction between HSPA8 and MCL1 is impaired in the absence of GIMAP5. Post-translationally, cleaved by CASP3 during apoptosis. In intact cells cleavage occurs preferentially after Asp-127, yielding a pro-apoptotic 28 kDa C-terminal fragment. Rapidly degraded in the absence of phosphorylation on Thr-163 in the PEST region. In terms of processing, phosphorylated on Ser-159, by GSK3, in response to IL3/interleukin-3 withdrawal. Phosphorylation at Ser-159 induces ubiquitination and proteasomal degradation, abrogating the anti-apoptotic activity. Treatment with taxol or okadaic acid induces phosphorylation on additional sites. Post-translationally, ubiquitinated. Ubiquitination is induced by phosphorylation at Ser-159. Deubiquitinated by USP20; leading to increased stability.

The protein localises to the membrane. The protein resides in the cytoplasm. Its subcellular location is the mitochondrion. It localises to the nucleus. It is found in the nucleoplasm. Its function is as follows. Involved in the regulation of apoptosis versus cell survival, and in the maintenance of viability but not of proliferation. Mediates its effects by interactions with a number of other regulators of apoptosis. Isoform 1 inhibits apoptosis. Isoform 2 promotes apoptosis. The polypeptide is Induced myeloid leukemia cell differentiation protein Mcl-1 (MCL1) (Homo sapiens (Human)).